Reading from the N-terminus, the 163-residue chain is ATP synthase subunit b (163 aa).

A helical transmembrane segment spans residues 13–33 (SFILFVWFCMKYIWPPIIFAI).

It belongs to the ATPase B chain family. F-type ATPases have 2 components, F(1) - the catalytic core - and F(0) - the membrane proton channel. F(1) has five subunits: alpha(3), beta(3), gamma(1), delta(1), epsilon(1). F(0) has three main subunits: a(1), b(2) and c(10-14). The alpha and beta chains form an alternating ring which encloses part of the gamma chain. F(1) is attached to F(0) by a central stalk formed by the gamma and epsilon chains, while a peripheral stalk is formed by the delta and b chains.

It is found in the cell membrane. Its function is as follows. F(1)F(0) ATP synthase produces ATP from ADP in the presence of a proton or sodium gradient. F-type ATPases consist of two structural domains, F(1) containing the extramembraneous catalytic core and F(0) containing the membrane proton channel, linked together by a central stalk and a peripheral stalk. During catalysis, ATP synthesis in the catalytic domain of F(1) is coupled via a rotary mechanism of the central stalk subunits to proton translocation. Component of the F(0) channel, it forms part of the peripheral stalk, linking F(1) to F(0). The chain is ATP synthase subunit b from Buchnera aphidicola subsp. Schizaphis graminum (strain Sg).